A 1342-amino-acid polypeptide reads, in one-letter code: DNA-directed RNA polymerase subunit beta (1342 aa).

Belongs to the RNA polymerase beta chain family. As to quaternary structure, the RNAP catalytic core consists of 2 alpha, 1 beta, 1 beta' and 1 omega subunit. When a sigma factor is associated with the core the holoenzyme is formed, which can initiate transcription.

The enzyme catalyses RNA(n) + a ribonucleoside 5'-triphosphate = RNA(n+1) + diphosphate. Its function is as follows. DNA-dependent RNA polymerase catalyzes the transcription of DNA into RNA using the four ribonucleoside triphosphates as substrates. This is DNA-directed RNA polymerase subunit beta from Actinobacillus pleuropneumoniae serotype 5b (strain L20).